A 214-amino-acid chain; its full sequence is dITP/XTP pyrophosphatase (214 aa).

Ser13–Lys18 contributes to the substrate binding site. 2 residues coordinate Mg(2+): Asp45 and Asp74. Asp74 serves as the catalytic Proton acceptor. Substrate contacts are provided by residues Ser75, Phe163–Asp166, Lys186, and His199–Arg200.

This sequence belongs to the HAM1 NTPase family. Homodimer. The cofactor is Mg(2+).

The enzyme catalyses XTP + H2O = XMP + diphosphate + H(+). It catalyses the reaction dITP + H2O = dIMP + diphosphate + H(+). It carries out the reaction ITP + H2O = IMP + diphosphate + H(+). Functionally, pyrophosphatase that catalyzes the hydrolysis of nucleoside triphosphates to their monophosphate derivatives, with a high preference for the non-canonical purine nucleotides XTP (xanthosine triphosphate), dITP (deoxyinosine triphosphate) and ITP. Seems to function as a house-cleaning enzyme that removes non-canonical purine nucleotides from the nucleotide pool, thus preventing their incorporation into DNA/RNA and avoiding chromosomal lesions. The chain is dITP/XTP pyrophosphatase from Rhizobium meliloti (strain 1021) (Ensifer meliloti).